Here is a 241-residue protein sequence, read N- to C-terminus: Chaperone protein FimC (241 aa).

Residues 1–36 (MSNKNVNVRKSQEITFCLLAGILMFMAMVVAGRAEA) form the signal peptide.

This sequence belongs to the periplasmic pilus chaperone family.

Its subcellular location is the periplasm. In terms of biological role, required for the biogenesis of type 1 fimbriae. Binds and interact with FimH. The chain is Chaperone protein FimC (fimC) from Escherichia coli O6:H1 (strain CFT073 / ATCC 700928 / UPEC).